The sequence spans 89 residues: Neurotoxin LmNaTx28 (89 aa).

A signal peptide spans 1 to 18 (MNLPTVLCIIALILGVRS). An LCN-type CS-alpha/beta domain is found at 20-85 (KNGFFTKLGK…VADSSEKACQ (66 aa)). Disulfide bonds link Cys33-Cys57, Cys43-Cys62, Cys47-Cys64, and Cys58-Cys84.

This sequence belongs to the long (4 C-C) scorpion toxin superfamily. Sodium channel inhibitor family. Beta subfamily. As to expression, expressed by the venom gland.

The protein localises to the secreted. Its function is as follows. Binds voltage-independently at site-4 of sodium channels (Nav) and shift the voltage of activation toward more negative potentials thereby affecting sodium channel activation and promoting spontaneous and repetitive firing. In Lychas mucronatus (Chinese swimming scorpion), this protein is Neurotoxin LmNaTx28.